Here is a 460-residue protein sequence, read N- to C-terminus: Cysteine--tRNA ligase (460 aa).

Cys28 serves as a coordination point for Zn(2+). The 'HIGH' region motif lies at 30-40 (MTVYDYCHLGH). 3 residues coordinate Zn(2+): Cys209, His234, and Glu238. Residues 266–270 (KMSKS) carry the 'KMSKS' region motif. Lys269 contacts ATP.

It belongs to the class-I aminoacyl-tRNA synthetase family. In terms of assembly, monomer. It depends on Zn(2+) as a cofactor.

The protein localises to the cytoplasm. The enzyme catalyses tRNA(Cys) + L-cysteine + ATP = L-cysteinyl-tRNA(Cys) + AMP + diphosphate. The polypeptide is Cysteine--tRNA ligase (Pseudomonas syringae pv. syringae (strain B728a)).